The sequence spans 547 residues: G protein-coupled receptor associated sorting protein 3 (547 aa).

Basic residues-rich tracts occupy residues 1-10 (MTGTKNKTRA) and 38-48 (AKTRAKAKAKT). Residues 1 to 53 (MTGTKNKTRAQAKTEKKPVTQAKAGAEREATGVVRPVAKTRAKAKAKTGSKTD) form a disordered region.

This sequence belongs to the GPRASP family. Homodimer.

It is found in the cytoplasm. The protein localises to the nucleus. Its function is as follows. Survival and differentiation promoting protein that plays a role in the regulation of neurosynaptogenesis. Induces phosphatase PP2A activity which results in APP dephosphorylation and inhibits BACE1-mediated processing of APP. The sequence is that of G protein-coupled receptor associated sorting protein 3 (GPRASP3) from Macaca fascicularis (Crab-eating macaque).